Reading from the N-terminus, the 296-residue chain is Undecaprenyl-diphosphatase (296 aa).

Helical transmembrane passes span 48-68 (SAFT…AWVF), 104-124 (LTLW…LLFD), 131-151 (LFSV…MIFA), 167-187 (ITFF…WPGF), 208-228 (SDFT…LSLV), 237-257 (SHIP…LLSI), and 272-292 (FAIY…GFGI).

The protein belongs to the UppP family.

Its subcellular location is the cell membrane. The catalysed reaction is di-trans,octa-cis-undecaprenyl diphosphate + H2O = di-trans,octa-cis-undecaprenyl phosphate + phosphate + H(+). Functionally, catalyzes the dephosphorylation of undecaprenyl diphosphate (UPP). Confers resistance to bacitracin. The protein is Undecaprenyl-diphosphatase of Staphylococcus carnosus (strain TM300).